Consider the following 359-residue polypeptide: DNA replication and repair protein RecF (359 aa).

30–37 (GPNGSGKT) provides a ligand contact to ATP.

It belongs to the RecF family.

Its subcellular location is the cytoplasm. In terms of biological role, the RecF protein is involved in DNA metabolism; it is required for DNA replication and normal SOS inducibility. RecF binds preferentially to single-stranded, linear DNA. It also seems to bind ATP. This is DNA replication and repair protein RecF from Aliivibrio salmonicida (strain LFI1238) (Vibrio salmonicida (strain LFI1238)).